Consider the following 389-residue polypeptide: Glutamate 5-kinase (389 aa).

ATP is bound at residue Lys16. The substrate site is built by Ser56, Asp143, and Asn155. 175 to 176 (SD) provides a ligand contact to ATP. In terms of domain architecture, PUA spans 281-358 (AGELHVDEGA…AEIEAILGYA (78 aa)).

The protein belongs to the glutamate 5-kinase family.

Its subcellular location is the cytoplasm. The catalysed reaction is L-glutamate + ATP = L-glutamyl 5-phosphate + ADP. It functions in the pathway amino-acid biosynthesis; L-proline biosynthesis; L-glutamate 5-semialdehyde from L-glutamate: step 1/2. Its function is as follows. Catalyzes the transfer of a phosphate group to glutamate to form L-glutamate 5-phosphate. The sequence is that of Glutamate 5-kinase from Rhizobium etli (strain ATCC 51251 / DSM 11541 / JCM 21823 / NBRC 15573 / CFN 42).